Here is a 178-residue protein sequence, read N- to C-terminus: Gamma-crystallin M1 (178 aa).

Beta/gamma crystallin 'Greek key' domains are found at residues 2-40 (GKIIFYDDRNFQGRSYDCMSDCSDISSYLSRVGSIRVES) and 41-86 (GCFM…RMIP). A connecting peptide region spans residues 87–91 (PYRGS). Beta/gamma crystallin 'Greek key' domains are found at residues 92–132 (YRMR…HVMD) and 133–175 (GHWL…RRIT).

The protein belongs to the beta/gamma-crystallin family. Monomer.

Functionally, crystallins are the dominant structural components of the vertebrate eye lens. The sequence is that of Gamma-crystallin M1 from Cyprinus carpio (Common carp).